A 617-amino-acid chain; its full sequence is uncharacterized protein (617 aa).

The chain crosses the membrane as a helical span at residues 103 to 123; that stretch reads AGVLLAKFFPLLFLYPLTYLA. The 410-residue stretch at 200 to 609 folds into the Protein kinase domain; the sequence is FETREPVGSG…DILEAAKPFL (410 aa). ATP contacts are provided by residues 206–214 and Lys302; that span reads VGSGCVAQV. Asp436 functions as the Proton acceptor in the catalytic mechanism.

This sequence belongs to the protein kinase superfamily. ADCK protein kinase family.

It is found in the mitochondrion. It localises to the membrane. Functionally, the function of this protein is not yet clear. It is not known if it has protein kinase activity and what type of substrate it would phosphorylate (Ser, Thr or Tyr). Involved in the mitochondrial import of CoQ precursors, plays a role in muscle mitochondrial function and fatty acid beta-oxidation. This is an uncharacterized protein from Mus musculus (Mouse).